We begin with the raw amino-acid sequence, 85 residues long: Beta-defensin 18 (85 aa).

An N-terminal signal peptide occupies residues 1–23; that stretch reads MQSTMKMFGIILMVIFSVSCGPS. 3 disulfide bridges follow: Cys39/Cys65, Cys46/Cys60, and Cys50/Cys66.

This sequence belongs to the beta-defensin family.

The protein localises to the secreted. Has antibacterial activity. This chain is Beta-defensin 18 (Defb18), found in Mus musculus (Mouse).